The chain runs to 318 residues: Glutathione synthetase (318 aa).

Positions 125–311 constitute an ATP-grasp domain; that stretch reads EKLFTAWFPE…ITGKLMDAIE (187 aa). 151-208 contributes to the ATP binding site; that stretch reads FRQEHGDIILKPLDGMGGASIFRVKENDPNVSVIIETLTNHGQNYAMAQTFVPDISNG. Residues Glu-282 and Asn-284 each contribute to the Mg(2+) site.

This sequence belongs to the prokaryotic GSH synthase family. Requires Mg(2+) as cofactor. Mn(2+) serves as cofactor.

It carries out the reaction gamma-L-glutamyl-L-cysteine + glycine + ATP = glutathione + ADP + phosphate + H(+). Its pathway is sulfur metabolism; glutathione biosynthesis; glutathione from L-cysteine and L-glutamate: step 2/2. The sequence is that of Glutathione synthetase from Vibrio vulnificus (strain YJ016).